The chain runs to 180 residues: Adenine phosphoribosyltransferase (180 aa).

The protein belongs to the purine/pyrimidine phosphoribosyltransferase family. As to quaternary structure, homodimer.

The protein localises to the cytoplasm. The catalysed reaction is AMP + diphosphate = 5-phospho-alpha-D-ribose 1-diphosphate + adenine. The protein operates within purine metabolism; AMP biosynthesis via salvage pathway; AMP from adenine: step 1/1. Its function is as follows. Catalyzes a salvage reaction resulting in the formation of AMP, that is energically less costly than de novo synthesis. The polypeptide is Adenine phosphoribosyltransferase (Rhizobium johnstonii (strain DSM 114642 / LMG 32736 / 3841) (Rhizobium leguminosarum bv. viciae)).